Here is a 27-residue protein sequence, read N- to C-terminus: VIGGAECNINEHRSLVLLYXSSSXFGE.

Residues 1-27 (VIGGAECNINEHRSLVLLYXSSSXFGE) enclose the Peptidase S1 domain.

The protein belongs to the peptidase S1 family. Snake venom subfamily. Heterodimer of an alpha and a beta chain. Subunit beta is constituted of two disulfide-linked polypeptidic chains, beta and beta'. Calcium appears to be required for structural cohesion of the molecule. Post-translationally, both chains alpha and beta are N-glycosylated. As to expression, expressed by the venom gland.

It localises to the secreted. Its activity is regulated as follows. Inhibited by diisopropylfluorophosphate (DFP), benzamidine, heparin and hirudin, but not by plasmatic thrombin inhibitors, antithrombin-III and ecotin. Its function is as follows. Snake venom serine protease that exhibits alpha-fibrinase and beta-fibrinogenase activities. It replaces missing factors VIII (F8) and IX (F9) in deficient plasmas by activating purified human factor X (F10) into factor Xa. It releases serotonin from platelets and induces platelet aggregation in human (but not in rabbit). Has caseinolytic, arginine-esterase and amidase activities. The chain is Snake venom serine protease Afaacytin alpha/beta/beta' chains from Cerastes cerastes (Horned desert viper).